Reading from the N-terminus, the 821-residue chain is Cation/H(+) antiporter 15 (821 aa).

Helical transmembrane passes span L37–I57, R65–G82, V97–V117, A131–F151, I166–A186, M200–L220, F228–V248, F268–G288, V292–I312, F318–A338, F350–F370, G378–V398, and F410–I430. The tract at residues D800 to R821 is disordered.

This sequence belongs to the monovalent cation:proton antiporter 2 (CPA2) transporter (TC 2.A.37) family. CHX (TC 2.A.37.4) subfamily. In terms of tissue distribution, specifically expressed in pollen.

It is found in the membrane. Functionally, may operate as a cation/H(+) antiporter. The polypeptide is Cation/H(+) antiporter 15 (CHX15) (Arabidopsis thaliana (Mouse-ear cress)).